Here is a 203-residue protein sequence, read N- to C-terminus: Abscisic acid receptor PYL5 (203 aa).

Residues 1 to 18 (MRSPVQLQHGSDATNGFH) are compositionally biased toward polar residues. The tract at residues 1–29 (MRSPVQLQHGSDATNGFHTLQPHDQTDGP) is disordered. The segment at 51–201 (HDVGPDQCCS…NLQSLARSTN (151 aa)) is START-like. Abscisate-binding positions include Lys87, 117-122 (AVSSTE), 144-150 (RLKNYRS), and Glu166. Residues 113-117 (SGLPA) carry the Gate loop motif. The Latch loop signature appears at 143–145 (HRL).

Belongs to the PYR/PYL/RCAR abscisic acid intracellular receptor family. As to quaternary structure, monomer. Homodimer. Binds ABA on one subunit only. Binds to CARs protein in an ABA-independent manner, both at the plasma membrane and in the nucleus. Binds both (-)-ABA and (+)-ABA. Interacts with HAB1, ABI1 and ABI2, and possibly with other PP2Cs.

Its subcellular location is the cytoplasm. It localises to the nucleus. It is found in the cell membrane. Functionally, receptor for abscisic acid (ABA) required for ABA-mediated responses such as stomatal closure and germination inhibition. Inhibits the activity of group-A protein phosphatases type 2C (PP2Cs) in an ABA-independent manner but more efficiently when activated by ABA. Confers enhanced sensitivity to ABA. Can be activated by both (-)-ABA and (+)-ABA. The polypeptide is Abscisic acid receptor PYL5 (PYL5) (Arabidopsis thaliana (Mouse-ear cress)).